A 299-amino-acid chain; its full sequence is Protease HtpX homolog (299 aa).

2 helical membrane-spanning segments follow: residues 15 to 35 (ILLL…GYLF) and 39 to 59 (GLGG…SMIF). Position 143 (His-143) interacts with Zn(2+). The active site involves Glu-144. A Zn(2+)-binding site is contributed by His-147. The next 2 helical transmembrane spans lie at 158-178 (IAVA…RMMW) and 198-218 (IIML…ATLV). Glu-227 is a Zn(2+) binding site.

This sequence belongs to the peptidase M48B family. It depends on Zn(2+) as a cofactor.

It localises to the cell membrane. This chain is Protease HtpX homolog, found in Streptococcus pneumoniae (strain Hungary19A-6).